Consider the following 185-residue polypeptide: Ribosome-recycling factor (185 aa).

Belongs to the RRF family.

It is found in the cytoplasm. In terms of biological role, responsible for the release of ribosomes from messenger RNA at the termination of protein biosynthesis. May increase the efficiency of translation by recycling ribosomes from one round of translation to another. The protein is Ribosome-recycling factor of Glaesserella parasuis serovar 5 (strain SH0165) (Haemophilus parasuis).